Reading from the N-terminus, the 342-residue chain is Flap endonuclease 1 (342 aa).

Positions 1–99 are N-domain; that stretch reads MGVKIGELIE…RAIEERVRAR (99 aa). Residues D28, D81, E153, E155, D174, D176, and D237 each coordinate Mg(2+). The I-domain stretch occupies residues 117–259; it reads EARKYAQAAL…RALELVKKYK (143 aa).

It belongs to the XPG/RAD2 endonuclease family. FEN1 subfamily. In terms of assembly, interacts with PCNA. PCNA stimulates the nuclease activity without altering cleavage specificity. Mg(2+) serves as cofactor.

Structure-specific nuclease with 5'-flap endonuclease and 5'-3' exonuclease activities involved in DNA replication and repair. During DNA replication, cleaves the 5'-overhanging flap structure that is generated by displacement synthesis when DNA polymerase encounters the 5'-end of a downstream Okazaki fragment. Binds the unpaired 3'-DNA end and kinks the DNA to facilitate 5' cleavage specificity. Cleaves one nucleotide into the double-stranded DNA from the junction in flap DNA, leaving a nick for ligation. Also involved in the base excision repair (BER) pathway. Acts as a genome stabilization factor that prevents flaps from equilibrating into structures that lead to duplications and deletions. Also possesses 5'-3' exonuclease activity on nicked or gapped double-stranded DNA. The chain is Flap endonuclease 1 from Korarchaeum cryptofilum (strain OPF8).